Here is a 297-residue protein sequence, read N- to C-terminus: MDFLINKKLKIFITLMETGSFSIATSVLYITRTPLSRVISGLERELKQRLFIRKNGTLIPTEFAQTIYRKVKSHYIFLHALEQEIGPTGKTKQLEIIFDEIYPESLKNLIISALTISGQKTNIMGRAVNSQIIEELCQTNNCIVISARNYFHRESLVCRTSVEGGVMLFIPKKFFLCGKPDINRLAGTPVLFHEGAKNFNLDTIYHFFEQTLGITNPAFSFDNVDLFSSLYRLQQGLAMLLIPVRVCRALGLSTDHALHIKGVALCTSLYYPTKKRETPDYRKAIKLIQQELKQSTF.

The HTH lysR-type domain occupies 1 to 61 (MDFLINKKLK…IRKNGTLIPT (61 aa)). The H-T-H motif DNA-binding region spans 21 to 40 (FSIATSVLYITRTPLSRVIS).

Belongs to the LysR transcriptional regulatory family.

It localises to the cytoplasm. Functionally, positive regulator for the plasmid-encoded virulence factors SpvA, SpvB, and SpvC. In Salmonella dublin, this protein is Virulence genes transcriptional activator SpvR (spvR).